We begin with the raw amino-acid sequence, 296 residues long: MGPTASGKTALAIALVEQHNCEIISVDSALIYRGMDVGSAKPNAEELGKAPHRLIDIRDPAESYSAADFRTDALQAIEEILAKGKTPLLVGGTMMYFKALLEGLSPLPAADDEIRKQIQIEADTYGWNHLHDELKQIDPVSAERIHPNDPQRLSRAIEVYRISGKSLTELTKIKSEPLPYDVVQFAISPKDRKQLHLSIEERFKLMLNQGFVEEVRSLRERSELHIDLPSMRCVGYRQCWQYLNGDYDYDTMVEKAVVATRQLAKRQLTWLRGWPELNWLESGSDSNLTTVLRHCR.

Position 2–9 (2–9 (GPTASGKT)) interacts with ATP. 4-9 (TASGKT) contacts substrate. Interaction with substrate tRNA regions lie at residues 27–30 (DSAL), 151–155 (QRLSR), and 232–237 (RCVGYR).

The protein belongs to the IPP transferase family. Monomer. Requires Mg(2+) as cofactor.

The enzyme catalyses adenosine(37) in tRNA + dimethylallyl diphosphate = N(6)-dimethylallyladenosine(37) in tRNA + diphosphate. Functionally, catalyzes the transfer of a dimethylallyl group onto the adenine at position 37 in tRNAs that read codons beginning with uridine, leading to the formation of N6-(dimethylallyl)adenosine (i(6)A). This chain is tRNA dimethylallyltransferase, found in Shewanella woodyi (strain ATCC 51908 / MS32).